A 562-amino-acid polypeptide reads, in one-letter code: uncharacterized protein (562 aa).

This is an uncharacterized protein from Saccharolobus islandicus (Sulfolobus islandicus).